We begin with the raw amino-acid sequence, 427 residues long: Methylthioribose kinase 2 (427 aa).

ATP contacts are provided by residues D49–N53, K68, and R122–I124. Substrate is bound at residue N51. D243 contacts substrate. D260–E262 contacts ATP. R370 contacts substrate.

It belongs to the methylthioribose kinase family. As to quaternary structure, homodimer.

It carries out the reaction 5-(methylsulfanyl)-D-ribose + ATP = 5-(methylsulfanyl)-alpha-D-ribose 1-phosphate + ADP + H(+). It participates in amino-acid biosynthesis; L-methionine biosynthesis via salvage pathway; S-methyl-5-thio-alpha-D-ribose 1-phosphate from S-methyl-5'-thioadenosine (hydrolase route): step 2/2. Catalyzes the phosphorylation of methylthioribose into methylthioribose-1-phosphate. In Oryza sativa subsp. japonica (Rice), this protein is Methylthioribose kinase 2 (MTK2).